We begin with the raw amino-acid sequence, 370 residues long: Protein-tyrosine sulfotransferase 1 (370 aa).

Topologically, residues 1–8 (MVGKLKQN) are cytoplasmic. The helical; Signal-anchor for type II membrane protein transmembrane segment at 9–25 (LLLACLVISSVTVFYLG) threads the bilayer. The Lumenal segment spans residues 26–370 (QHAMECHHRI…KEKPQTEQVE (345 aa)). Residue asparagine 60 is glycosylated (N-linked (GlcNAc...) asparagine). 3'-phosphoadenylyl sulfate is bound at residue 79–83 (RSGTT). Cysteine 97 and cysteine 157 are disulfide-bonded. The Proton donor/acceptor role is filled by glutamate 100. The segment at 102–106 (RVIPR) is interaction with peptide substrate. 3'-phosphoadenylyl sulfate-binding residues include arginine 184, serine 192, and arginine 196. A disulfide bond links cysteine 226 and cysteine 234. Residue tyrosine 239 participates in 3'-phosphoadenylyl sulfate binding. A glycan (N-linked (GlcNAc...) asparagine) is linked at asparagine 262. 3'-phosphoadenylyl sulfate is bound by residues 286–295 (STDQVIKPVN) and lysine 301.

It belongs to the protein sulfotransferase family. Homodimer. Can also form heterodimers with TPST2. Post-translationally, N-glycosylated.

The protein localises to the golgi apparatus membrane. It catalyses the reaction L-tyrosyl-[protein] + 3'-phosphoadenylyl sulfate = O-sulfo-L-tyrosine-[protein] + adenosine 3',5'-bisphosphate + H(+). Its function is as follows. Catalyzes the O-sulfation of tyrosine residues within acidic motifs of polypeptides, using 3'-phosphoadenylyl sulfate (PAPS) as cosubstrate. This Rattus norvegicus (Rat) protein is Protein-tyrosine sulfotransferase 1 (Tpst1).